A 312-amino-acid polypeptide reads, in one-letter code: Methionyl-tRNA formyltransferase (312 aa).

Residue 109-112 participates in (6S)-5,6,7,8-tetrahydrofolate binding; sequence SILP.

This sequence belongs to the Fmt family.

The catalysed reaction is L-methionyl-tRNA(fMet) + (6R)-10-formyltetrahydrofolate = N-formyl-L-methionyl-tRNA(fMet) + (6S)-5,6,7,8-tetrahydrofolate + H(+). Attaches a formyl group to the free amino group of methionyl-tRNA(fMet). The formyl group appears to play a dual role in the initiator identity of N-formylmethionyl-tRNA by promoting its recognition by IF2 and preventing the misappropriation of this tRNA by the elongation apparatus. This Dictyoglomus thermophilum (strain ATCC 35947 / DSM 3960 / H-6-12) protein is Methionyl-tRNA formyltransferase.